Consider the following 266-residue polypeptide: Succinate dehydrogenase [ubiquinone] iron-sulfur subunit, mitochondrial (266 aa).

A mitochondrion-targeting transit peptide spans 1–20 (MLNVLLRRKAFCLVTKKGMA). The 2Fe-2S ferredoxin-type domain maps to 36–127 (FKVYRWNPDE…QLKIYPLPHM (92 aa)). C87, C92, C95, and C107 together coordinate [2Fe-2S] cluster. One can recognise a 4Fe-4S ferredoxin-type domain in the interval 169 to 199 (DRKKLDGLYECILCACCSTSCPSYWWNQEQY). [4Fe-4S] cluster contacts are provided by C179, C182, and C185. C189 serves as a coordination point for [3Fe-4S] cluster. Position 194 (W194) interacts with a ubiquinone. Residues C236 and C242 each coordinate [3Fe-4S] cluster. C246 contributes to the [4Fe-4S] cluster binding site.

It belongs to the succinate dehydrogenase/fumarate reductase iron-sulfur protein family. In terms of assembly, component of complex II composed of four subunits: a flavoprotein (FP), an iron-sulfur protein (IP), and a cytochrome b composed of a large and a small subunit. [2Fe-2S] cluster serves as cofactor. [3Fe-4S] cluster is required as a cofactor. It depends on [4Fe-4S] cluster as a cofactor.

Its subcellular location is the mitochondrion inner membrane. The catalysed reaction is a quinone + succinate = fumarate + a quinol. It functions in the pathway carbohydrate metabolism; tricarboxylic acid cycle; fumarate from succinate (eukaryal route): step 1/1. Functionally, subunit of succinate dehydrogenase (SDH) that is involved in complex II of the mitochondrial electron transport chain and is responsible for transferring electrons from succinate to ubiquinone (coenzyme Q). SDH1 and SDH2 form the catalytic dimer. Electrons flow from succinate to the FAD bound to SDH1, and sequentially through the iron-sulfur clusters bound to SDH2 and enter the membrane dimer formed by SDH3 and SDH4. In Saccharomyces cerevisiae (strain ATCC 204508 / S288c) (Baker's yeast), this protein is Succinate dehydrogenase [ubiquinone] iron-sulfur subunit, mitochondrial (SDH2).